The following is a 455-amino-acid chain: Beta-glucosidase A (455 aa).

Glu165 functions as the Proton donor in the catalytic mechanism. Catalysis depends on Glu363, which acts as the Nucleophile.

It belongs to the glycosyl hydrolase 1 family.

The enzyme catalyses Hydrolysis of terminal, non-reducing beta-D-glucosyl residues with release of beta-D-glucose.. This Caldicellulosiruptor saccharolyticus (Caldocellum saccharolyticum) protein is Beta-glucosidase A (bglA).